Here is a 955-residue protein sequence, read N- to C-terminus: Thyroid hormone receptor-associated protein 3 (955 aa).

The disordered stretch occupies residues 1–94 (MSKTNKSKSG…YFRGRNRGFY (94 aa)). S2 carries the post-translational modification N-acetylserine. The interval 2–190 (SKTNKSKSGS…KSSSKDSRPS (189 aa)) is required for mRNA splicing activation. Over residues 14 to 51 (SRSRSASRSRSRSFSKSRSRSRSLSRSRKRRLSSRSRS) the composition is skewed to basic residues. R17 carries the dimethylated arginine modification. Residues 58 to 75 (HNRERNHPRVYQNRDFRG) show a composition bias toward basic and acidic residues. Position 66 is an asymmetric dimethylarginine (R66). The segment covering 82–94 (RPYYFRGRNRGFY) has biased composition (low complexity). Asymmetric dimethylarginine is present on residues R101 and R108. The tract at residues 117-559 (AYSPRRGRSR…AKGDFPTGKS (443 aa)) is disordered. Basic residues predominate over residues 121–143 (RRGRSRSRSPKRRSPSPRSRSHS). Positions 144–155 (RNSDKSSSDRSR) are enriched in basic and acidic residues. Low complexity predominate over residues 157–166 (SSSSRSSSNH). Positions 167–188 (SRVESSKRKSAKEKKSSSKDSR) are enriched in basic and acidic residues. K202 is covalently cross-linked (Glycyl lysine isopeptide (Lys-Gly) (interchain with G-Cter in SUMO1); alternate). A Glycyl lysine isopeptide (Lys-Gly) (interchain with G-Cter in SUMO2); alternate cross-link involves residue K202. Residues 204–220 (QTFSGGTSQDTKASESS) show a composition bias toward polar residues. K215 participates in a covalent cross-link: Glycyl lysine isopeptide (Lys-Gly) (interchain with G-Cter in SUMO2). A Phosphoserine modification is found at S220. Residue K221 forms a Glycyl lysine isopeptide (Lys-Gly) (interchain with G-Cter in SUMO2); alternate linkage. K221 bears the N6-acetyllysine; alternate mark. Residues S232, S237, S240, S243, and S248 each carry the phosphoserine modification. K252 participates in a covalent cross-link: Glycyl lysine isopeptide (Lys-Gly) (interchain with G-Cter in SUMO2); alternate. K252 bears the N6-methyllysine; alternate mark. Residues S253 and S257 each carry the phosphoserine modification. Pro residues predominate over residues 266–276 (RPSPVPKPSPP). Residues 282–300 (QMGSTLPSGAGYQSGTHQG) are compositionally biased toward polar residues. Low complexity predominate over residues 305 to 331 (GSGSLSPSKKSPVGKSPPSTGSTYGSS). Phosphoserine occurs at positions 315, 320, and 323. Phosphothreonine is present on T324. S326 is subject to Phosphoserine. Residue Y328 is modified to Phosphotyrosine. A Glycyl lysine isopeptide (Lys-Gly) (interchain with G-Cter in SUMO2) cross-link involves residue K333. The residue at position 339 (S339) is a Phosphoserine. A Glycyl lysine isopeptide (Lys-Gly) (interchain with G-Cter in SUMO2); alternate cross-link involves residue K346. Position 346 is an N6-acetyllysine; alternate (K346). Residues 347 to 377 (RYLEEQKTENGKDKEQKQTNTDKEKIKEKGS) are compositionally biased toward basic and acidic residues. Residues K353 and K375 each participate in a glycyl lysine isopeptide (Lys-Gly) (interchain with G-Cter in SUMO2) cross-link. Residues 359-955 (DKEQKQTNTD…EKDNIQPTTE (597 aa)) are required for mRNA decay activity. Residues S377 and S379 each carry the phosphoserine modification. A Glycyl lysine isopeptide (Lys-Gly) (interchain with G-Cter in SUMO1); alternate cross-link involves residue K387. Residue K387 forms a Glycyl lysine isopeptide (Lys-Gly) (interchain with G-Cter in SUMO2); alternate linkage. Glycyl lysine isopeptide (Lys-Gly) (interchain with G-Cter in SUMO2) cross-links involve residues K389 and K396. T397 carries the phosphothreonine modification. K401 is covalently cross-linked (Glycyl lysine isopeptide (Lys-Gly) (interchain with G-Cter in SUMO2)). A phosphoserine mark is found at S406 and S408. Residues 414–452 (LRDDFEKKMADFHKEEMDDQDKDKAKGRKESEFDDEPKF) show a composition bias toward basic and acidic residues. Glycyl lysine isopeptide (Lys-Gly) (interchain with G-Cter in SUMO2) cross-links involve residues K421 and K427. Residue S444 is modified to Phosphoserine. A Glycyl lysine isopeptide (Lys-Gly) (interchain with G-Cter in SUMO1); alternate cross-link involves residue K451. Glycyl lysine isopeptide (Lys-Gly) (interchain with G-Cter in SUMO2); alternate cross-links involve residues K451 and K455. At K455 the chain carries N6-acetyllysine; alternate. Residues K461 and K467 each participate in a glycyl lysine isopeptide (Lys-Gly) (interchain with G-Cter in SUMO2) cross-link. S468 carries the post-translational modification Phosphoserine. Glycyl lysine isopeptide (Lys-Gly) (interchain with G-Cter in SUMO2); alternate cross-links involve residues K470 and K481. N6-acetyllysine; alternate is present on residues K470 and K481. K486 is covalently cross-linked (Glycyl lysine isopeptide (Lys-Gly) (interchain with G-Cter in SUMO2)). The segment covering 495–521 (FPERSKKEDRGKRSEGGHRGFVPEKNF) has biased composition (basic and acidic residues). K519 carries the post-translational modification N6-acetyllysine. K527 is covalently cross-linked (Glycyl lysine isopeptide (Lys-Gly) (interchain with G-Cter in SUMO2); alternate). Position 527 is an N6-acetyllysine; alternate (K527). Position 535 is a phosphoserine (S535). Basic and acidic residues predominate over residues 540 to 550 (KTSESRDKLGA). A Glycyl lysine isopeptide (Lys-Gly) (interchain with G-Cter in SUMO2) cross-link involves residue K551. 552–559 (GDFPTGKS) is an ATP binding site. A Glycyl lysine isopeptide (Lys-Gly) (interchain with G-Cter in SUMO2); alternate cross-link involves residue K558. K558 carries the post-translational modification N6-acetyllysine; alternate. Phosphoserine occurs at positions 560, 562, and 575. A Glycyl lysine isopeptide (Lys-Gly) (interchain with G-Cter in SUMO2) cross-link involves residue K602. A phosphoserine mark is found at S619, S622, S672, S682, and S684. The segment covering 663 to 680 (EQEAAKNKKSPEIHRRID) has biased composition (basic and acidic residues). Residues 663 to 955 (EQEAAKNKKS…EKDNIQPTTE (293 aa)) are disordered. Over residues 691–761 (LAHDEMKSPR…RSAEKTEKTH (71 aa)) the composition is skewed to basic and acidic residues. K697 is covalently cross-linked (Glycyl lysine isopeptide (Lys-Gly) (interchain with G-Cter in SUMO2)). The residue at position 698 (S698) is a Phosphoserine. Glycyl lysine isopeptide (Lys-Gly) (interchain with G-Cter in SUMO2) cross-links involve residues K705, K709, K711, K756, and K759. The segment covering 762–775 (KGSKKQKKHRRARD) has biased composition (basic residues). Low complexity predominate over residues 779–789 (SSSSSSQSSHS). K811 is subject to N6-acetyllysine. Position 845 is an asymmetric dimethylarginine (R845). Low complexity predominate over residues 848-859 (YSGNNNNNSNND). Phosphothreonine is present on T874. Glycyl lysine isopeptide (Lys-Gly) (interchain with G-Cter in SUMO2) cross-links involve residues K876 and K879. Basic and acidic residues predominate over residues 881–895 (YLHDDREGEGSDKWV). Phosphoserine occurs at positions 928 and 939. Residues 930–940 (EEGEIEDDESG) are compositionally biased toward acidic residues.

It belongs to the BCLAF1/THRAP3 family. As to quaternary structure, associated with the large multiprotein complex TRAP (Mediator complex-like). Interacts with SFPQ; the interaction is dependent on SFPQ phosphorylation at 'Thr-687' and inhibits binding of SFPQ to an ESS1 exonic splicing silencer element-containing RNA. Interacts with NXF1. Component of the SNARP complex which consists at least of SNIP1, SNW1, THRAP3, BCLAF1 and PNN. Associated with spliced mRNP complexes. Interacts with HELZ2 and PPARG. Interacts with CLOCK and BMAL1. Component of a MACOM-like complex, named WTAP complex, composed of WTAP, ZC3H13, CBLL1, KIAA1429, RBM15, BCLAF1 and THRAP3. Post-translationally, ADP-ribosylation during genotoxic stress promotes accumulation in nuclear speckles. In terms of tissue distribution, ubiquitous.

The protein resides in the nucleus. It localises to the nucleoplasm. The protein localises to the nucleus speckle. Its function is as follows. Involved in pre-mRNA splicing. Remains associated with spliced mRNA after splicing which probably involves interactions with the exon junction complex (EJC). Can trigger mRNA decay which seems to be independent of nonsense-mediated decay involving premature stop codons (PTC) recognition. May be involved in nuclear mRNA decay. Involved in regulation of signal-induced alternative splicing. During splicing of PTPRC/CD45 is proposed to sequester phosphorylated SFPQ from PTPRC/CD45 pre-mRNA in resting T-cells. Involved in cyclin-D1/CCND1 mRNA stability probably by acting as component of the SNARP complex which associates with both the 3'end of the CCND1 gene and its mRNA. Involved in response to DNA damage. Is excluced from DNA damage sites in a manner that parallels transcription inhibition; the function may involve the SNARP complex. Initially thought to play a role in transcriptional coactivation through its association with the TRAP complex; however, it is not regarded as a stable Mediator complex subunit. Cooperatively with HELZ2, enhances the transcriptional activation mediated by PPARG, maybe through the stabilization of the PPARG binding to DNA in presence of ligand. May play a role in the terminal stage of adipocyte differentiation. Plays a role in the positive regulation of the circadian clock. Acts as a coactivator of the CLOCK-BMAL1 heterodimer and promotes its transcriptional activator activity and binding to circadian target genes. The polypeptide is Thyroid hormone receptor-associated protein 3 (Homo sapiens (Human)).